A 221-amino-acid chain; its full sequence is Serine/arginine-rich splicing factor 9 (221 aa).

2 RRM domains span residues 14–89 and 111–187; these read GRIY…FPRT and FRVL…PERS. Residue K36 forms a Glycyl lysine isopeptide (Lys-Gly) (interchain with G-Cter in SUMO2) linkage. The tract at residues 188–200 is interaction with SAFB1; sequence TSYGYSRSRSGSR. S189 is modified (phosphoserine). Low complexity predominate over residues 189–198; it reads SYGYSRSRSG. The disordered stretch occupies residues 189 to 221; sequence SYGYSRSRSGSRGRDSPYQSRGSPHYFSPFRPY. At Y192 the chain carries Phosphotyrosine. 5 positions are modified to phosphoserine: S193, S195, S204, S208, and S211. Y214 is subject to Phosphotyrosine. At S216 the chain carries Phosphoserine.

It belongs to the splicing factor SR family. As to quaternary structure, interacts with KHDRBS3. Interacts with HABP4. Interacts with NOL3/ARC/NOP30. Interacts with NSEP1/YB-1/YB1. Interacts with SAFB/SAFB1. Interacts with SRSF6/SFRS6. Interacts with TRA2B/SFRS10. Interacts with C1QBP. May also interact with DUSP11/PIR1. Post-translationally, extensively phosphorylated on serine residues in the RS domain. As to expression, expressed at high levels in the heart, kidney, pancreas and placenta, and at lower levels in the brain, liver, lung and skeletal muscle.

The protein resides in the nucleus. Its function is as follows. Plays a role in constitutive splicing and can modulate the selection of alternative splice sites. Represses the splicing of MAPT/Tau exon 10. This is Serine/arginine-rich splicing factor 9 (SRSF9) from Homo sapiens (Human).